The primary structure comprises 371 residues: tRNA-specific 2-thiouridylase MnmA (371 aa).

ATP is bound by residues Gly-11–Ser-18 and Met-37. The interaction with target base in tRNA stretch occupies residues Asn-97–Asp-99. Cys-102 acts as the Nucleophile in catalysis. Cys-102 and Cys-199 form a disulfide bridge. An ATP-binding site is contributed by Gly-127. The segment at Lys-149–Gln-151 is interaction with tRNA. Cys-199 (cysteine persulfide intermediate) is an active-site residue. The segment at Arg-311 to Tyr-312 is interaction with tRNA.

Belongs to the MnmA/TRMU family.

Its subcellular location is the cytoplasm. It catalyses the reaction S-sulfanyl-L-cysteinyl-[protein] + uridine(34) in tRNA + AH2 + ATP = 2-thiouridine(34) in tRNA + L-cysteinyl-[protein] + A + AMP + diphosphate + H(+). Its function is as follows. Catalyzes the 2-thiolation of uridine at the wobble position (U34) of tRNA, leading to the formation of s(2)U34. The sequence is that of tRNA-specific 2-thiouridylase MnmA from Idiomarina loihiensis (strain ATCC BAA-735 / DSM 15497 / L2-TR).